We begin with the raw amino-acid sequence, 248 residues long: Putative imidazole glycerol phosphate synthase subunit hisF2 (248 aa).

Residue D129 is part of the active site.

Belongs to the HisA/HisF family. Heterodimer of HisH and HisF.

It is found in the cytoplasm. The catalysed reaction is 5-[(5-phospho-1-deoxy-D-ribulos-1-ylimino)methylamino]-1-(5-phospho-beta-D-ribosyl)imidazole-4-carboxamide + L-glutamine = D-erythro-1-(imidazol-4-yl)glycerol 3-phosphate + 5-amino-1-(5-phospho-beta-D-ribosyl)imidazole-4-carboxamide + L-glutamate + H(+). Its pathway is amino-acid biosynthesis; L-histidine biosynthesis; L-histidine from 5-phospho-alpha-D-ribose 1-diphosphate: step 5/9. Functionally, IGPS catalyzes the conversion of PRFAR and glutamine to IGP, AICAR and glutamate. The HisF subunit catalyzes the cyclization activity that produces IGP and AICAR from PRFAR using the ammonia provided by the HisH subunit. This chain is Putative imidazole glycerol phosphate synthase subunit hisF2 (hisF2), found in Campylobacter jejuni subsp. jejuni serotype O:2 (strain ATCC 700819 / NCTC 11168).